A 275-amino-acid polypeptide reads, in one-letter code: Diaminopimelate epimerase (275 aa).

Asn12, Gln45, and Asn65 together coordinate substrate. The active-site Proton donor is Cys74. Substrate is bound by residues 75–76 (GN), Asn158, Asn191, and 209–210 (ER). The active-site Proton acceptor is the Cys218. Residue 219 to 220 (GT) coordinates substrate.

This sequence belongs to the diaminopimelate epimerase family. As to quaternary structure, homodimer.

It localises to the cytoplasm. The enzyme catalyses (2S,6S)-2,6-diaminopimelate = meso-2,6-diaminopimelate. Its pathway is amino-acid biosynthesis; L-lysine biosynthesis via DAP pathway; DL-2,6-diaminopimelate from LL-2,6-diaminopimelate: step 1/1. Functionally, catalyzes the stereoinversion of LL-2,6-diaminopimelate (L,L-DAP) to meso-diaminopimelate (meso-DAP), a precursor of L-lysine and an essential component of the bacterial peptidoglycan. This Shewanella sp. (strain MR-4) protein is Diaminopimelate epimerase.